Consider the following 169-residue polypeptide: 6,7-dimethyl-8-ribityllumazine synthase (169 aa).

Residues W27, 61–63 (SYE), and 90–92 (VLI) contribute to the 5-amino-6-(D-ribitylamino)uracil site. 95-96 (ST) is a (2S)-2-hydroxy-3-oxobutyl phosphate binding site. Catalysis depends on H98, which acts as the Proton donor. Residue F123 participates in 5-amino-6-(D-ribitylamino)uracil binding. R137 lines the (2S)-2-hydroxy-3-oxobutyl phosphate pocket.

This sequence belongs to the DMRL synthase family. Homopentamer.

It localises to the mitochondrion intermembrane space. The catalysed reaction is (2S)-2-hydroxy-3-oxobutyl phosphate + 5-amino-6-(D-ribitylamino)uracil = 6,7-dimethyl-8-(1-D-ribityl)lumazine + phosphate + 2 H2O + H(+). The protein operates within cofactor biosynthesis; riboflavin biosynthesis; riboflavin from 2-hydroxy-3-oxobutyl phosphate and 5-amino-6-(D-ribitylamino)uracil: step 1/2. Functionally, catalyzes the formation of 6,7-dimethyl-8-ribityllumazine by condensation of 5-amino-6-(D-ribitylamino)uracil with 3,4-dihydroxy-2-butanone 4-phosphate. This is the penultimate step in the biosynthesis of riboflavin. The sequence is that of 6,7-dimethyl-8-ribityllumazine synthase (RIB4) from Saccharomyces cerevisiae (strain ATCC 204508 / S288c) (Baker's yeast).